Consider the following 202-residue polypeptide: Na(+)-translocating NADH-quinone reductase subunit E (202 aa).

6 helical membrane-spanning segments follow: residues 11–31 (SVFV…FLAI), 35–55 (IDAA…TVPV), 81–101 (FLGL…MEMV), 114–134 (GVFL…LLMV), 144–164 (VVFG…LAGI), and 182–202 (ITFI…GIAL).

Belongs to the NqrDE/RnfAE family. Composed of six subunits; NqrA, NqrB, NqrC, NqrD, NqrE and NqrF.

The protein localises to the cell inner membrane. It catalyses the reaction a ubiquinone + n Na(+)(in) + NADH + H(+) = a ubiquinol + n Na(+)(out) + NAD(+). NQR complex catalyzes the reduction of ubiquinone-1 to ubiquinol by two successive reactions, coupled with the transport of Na(+) ions from the cytoplasm to the periplasm. NqrA to NqrE are probably involved in the second step, the conversion of ubisemiquinone to ubiquinol. This is Na(+)-translocating NADH-quinone reductase subunit E from Saccharophagus degradans (strain 2-40 / ATCC 43961 / DSM 17024).